The primary structure comprises 121 residues: Alpha-endosulfine (121 aa).

Residues Met1–Phe53 are disordered. The residue at position 2 (Ser2) is an N-acetylserine. At Ser2 the chain carries Phosphoserine. The segment covering Glu16–Leu37 has biased composition (basic and acidic residues). The residue at position 21 (Thr21) is a Phosphothreonine. Ser43 is modified (phosphoserine). Ser67 bears the Phosphoserine; by GWL mark. A disordered region spans residues Asn79–Glu121. Position 109 is a phosphoserine; by PKA (Ser109).

This sequence belongs to the endosulfine family. As to quaternary structure, interacts (when phosphorylated at Ser-67) with PPP2R2D. Interacts with ABCC8. Interacts with SNCA; interaction is disrupted when phosphorylated at Ser-109. In terms of processing, phosphorylation at Ser-67 by GWL during mitosis is essential for interaction with PPP2R2D (PR55-delta) and subsequent inactivation of PP2A. Phosphorylated by PKA.

The protein resides in the cytoplasm. Its function is as follows. Protein phosphatase inhibitor that specifically inhibits protein phosphatase 2A (PP2A) during mitosis. When phosphorylated at Ser-67 during mitosis, specifically interacts with PPP2R2D (PR55-delta) and inhibits its activity, leading to inactivation of PP2A, an essential condition to keep cyclin-B1-CDK1 activity high during M phase. Also acts as a stimulator of insulin secretion by interacting with sulfonylurea receptor (ABCC8), thereby preventing sulfonylurea from binding to its receptor and reducing K(ATP) channel currents. The polypeptide is Alpha-endosulfine (ENSA) (Bos taurus (Bovine)).